Consider the following 161-residue polypeptide: Regulator of ribonuclease activity A (161 aa).

The protein belongs to the RraA family. As to quaternary structure, homotrimer. Binds to both RNA-binding sites in the C-terminal region of Rne and to RhlB.

It is found in the cytoplasm. Functionally, globally modulates RNA abundance by binding to RNase E (Rne) and regulating its endonucleolytic activity. Can modulate Rne action in a substrate-dependent manner by altering the composition of the degradosome. Modulates RNA-binding and helicase activities of the degradosome. The polypeptide is Regulator of ribonuclease activity A (Enterobacter sp. (strain 638)).